Here is a 373-residue protein sequence, read N- to C-terminus: NADPH-dependent 3-keto-steroid reductase HSD3B3 (373 aa).

NADP(+) is bound by residues 10–15 (GAGGFL), tyrosine 155, and lysine 159. The active-site Proton donor is the lysine 159. The chain crosses the membrane as a helical span at residues 288–308 (VALLYWFGFLLETVSFLLRPV).

The protein belongs to the 3-beta-HSD family. In terms of tissue distribution, high levels in adrenal gland, kidney and male liver (at protein level). Low levels in female liver (at protein level). Expressed in ovaries (at protein level).

The protein localises to the endoplasmic reticulum membrane. It is found in the mitochondrion membrane. The enzyme catalyses a 3beta-hydroxysteroid + NADP(+) = a 3-oxosteroid + NADPH + H(+). It carries out the reaction 5alpha-androstane-3beta,17beta-diol + NADP(+) = 17beta-hydroxy-5alpha-androstan-3-one + NADPH + H(+). Its pathway is steroid metabolism. Functionally, responsible for the reduction of the oxo group on the C-3 of 5alpha-androstane steroids. Catalyzes the conversion of dihydrotestosterone to its inactive form 5alpha-androstanediol, that does not bind androgen receptor/AR. Does not function as an isomerase. The polypeptide is NADPH-dependent 3-keto-steroid reductase HSD3B3 (HSD3B3) (Mesocricetus auratus (Golden hamster)).